Here is a 482-residue protein sequence, read N- to C-terminus: Thymidine phosphorylase (482 aa).

Positions 1-10 are excised as a propeptide; it reads MAALMTPGTG. A disordered region spans residues 1–36; that stretch reads MAALMTPGTGAPPAPGDFSGEGSQGLPDPSPEPKQL. Residue Thr6 is modified to Phosphothreonine. Substrate-binding residues include His116, Arg202, Ser217, and Lys221. 2 R-V-A-A-A-L-X(5,6)-L-G-R repeats span residues 265–279 and 329–342; these read RVAA…PLGR and RVAA…ALGR. R-A-L-X-X-A-L-V-L repeat units lie at residues 393-401 and 453-461; these read RALPLALVL and RALQEALVL.

It belongs to the thymidine/pyrimidine-nucleoside phosphorylase family. In terms of assembly, homodimer.

It carries out the reaction thymidine + phosphate = 2-deoxy-alpha-D-ribose 1-phosphate + thymine. Its pathway is pyrimidine metabolism; dTMP biosynthesis via salvage pathway; dTMP from thymine: step 1/2. May have a role in maintaining the integrity of the blood vessels. Has growth promoting activity on endothelial cells, angiogenic activity in vivo and chemotactic activity on endothelial cells in vitro. In terms of biological role, catalyzes the reversible phosphorolysis of thymidine. The produced molecules are then utilized as carbon and energy sources or in the rescue of pyrimidine bases for nucleotide synthesis. The polypeptide is Thymidine phosphorylase (Homo sapiens (Human)).